We begin with the raw amino-acid sequence, 445 residues long: Ribosomal protein uS12 methylthiotransferase RimO (445 aa).

The MTTase N-terminal domain occupies 4-119 (IKVALVSLGC…LLESIKVFLK (116 aa)). 6 residues coordinate [4Fe-4S] cluster: C13, C48, C82, C156, C160, and C163. The Radical SAM core domain maps to 142 to 372 (TTPTYTAYVR…MILQQSISKD (231 aa)). The 67-residue stretch at 375 to 441 (KEKIGKIYEV…EYDLIGVVYN (67 aa)) folds into the TRAM domain.

The protein belongs to the methylthiotransferase family. RimO subfamily. Requires [4Fe-4S] cluster as cofactor.

The protein resides in the cytoplasm. The catalysed reaction is L-aspartate(89)-[ribosomal protein uS12]-hydrogen + (sulfur carrier)-SH + AH2 + 2 S-adenosyl-L-methionine = 3-methylsulfanyl-L-aspartate(89)-[ribosomal protein uS12]-hydrogen + (sulfur carrier)-H + 5'-deoxyadenosine + L-methionine + A + S-adenosyl-L-homocysteine + 2 H(+). Its function is as follows. Catalyzes the methylthiolation of an aspartic acid residue of ribosomal protein uS12. The protein is Ribosomal protein uS12 methylthiotransferase RimO of Clostridium botulinum (strain Okra / Type B1).